A 277-amino-acid polypeptide reads, in one-letter code: N-acetylmuramic acid 6-phosphate etherase (277 aa).

The SIS domain maps to Ile53 to Arg216. Glu81 serves as the catalytic Proton donor. Glu112 is an active-site residue.

This sequence belongs to the GCKR-like family. MurNAc-6-P etherase subfamily. In terms of assembly, homodimer.

The enzyme catalyses N-acetyl-D-muramate 6-phosphate + H2O = N-acetyl-D-glucosamine 6-phosphate + (R)-lactate. It functions in the pathway amino-sugar metabolism; N-acetylmuramate degradation. Specifically catalyzes the cleavage of the D-lactyl ether substituent of MurNAc 6-phosphate, producing GlcNAc 6-phosphate and D-lactate. The sequence is that of N-acetylmuramic acid 6-phosphate etherase from Bacteroides thetaiotaomicron (strain ATCC 29148 / DSM 2079 / JCM 5827 / CCUG 10774 / NCTC 10582 / VPI-5482 / E50).